Here is a 440-residue protein sequence, read N- to C-terminus: Protein FPV117 (440 aa).

It belongs to the poxviruses G5 family.

This Fowlpox virus (strain NVSL) (FPV) protein is Protein FPV117.